We begin with the raw amino-acid sequence, 64 residues long: Large ribosomal subunit protein bL35 (64 aa).

Belongs to the bacterial ribosomal protein bL35 family.

This Levilactobacillus brevis (strain ATCC 367 / BCRC 12310 / CIP 105137 / JCM 1170 / LMG 11437 / NCIMB 947 / NCTC 947) (Lactobacillus brevis) protein is Large ribosomal subunit protein bL35.